A 311-amino-acid chain; its full sequence is Apolipoprotein E (311 aa).

A signal peptide spans 1–18; sequence MKVWWAVLAAAILAGCRA. 8 consecutive repeat copies span residues 74–95, 96–116, 117–138, 139–160, 161–182, 183–204, 205–226, and 227–248. The interval 74–248 is 8 X 22 AA approximate tandem repeats; the sequence is MLMEETMKEV…RLNEVREQVE (175 aa). A Methionine sulfoxide modification is found at Met136. The residue at position 140 (Ser140) is a Phosphoserine. Residues 151–161 are LDL and other lipoprotein receptors binding; sequence HLRKLRKRLLR. 155-158 is a binding site for heparin; it reads LRKR. The segment at 203–283 is lipid-binding and lipoprotein association; that stretch reads VATVGTLAGR…SWFEPLVEDM (81 aa). O-linked (GalNAc...) threonine glycosylation occurs at Thr205. 222-229 serves as a coordination point for heparin; the sequence is GERLRGHL. Residues 259–311 form a homooligomerization region; it reads PQMRLQAEAFQARLKSWFEPLVEDMQRQWAGLVEKLQAAMPSKAPAAAPIENQ. The segment at 271-283 is specificity for association with VLDL; that stretch reads RLKSWFEPLVEDM.

Belongs to the apolipoprotein A1/A4/E family. As to quaternary structure, homotetramer. May interact with ABCA1; functionally associated with ABCA1 in the biogenesis of HDLs. May interact with APP/A4 amyloid-beta peptide; the interaction is extremely stable in vitro but its physiological significance is unclear. May interact with MAPT. May interact with MAP2. In the cerebrospinal fluid, interacts with secreted SORL1. Interacts with PMEL; this allows the loading of PMEL luminal fragment on ILVs to induce fibril nucleation. In terms of processing, APOE exists as multiple glycosylated and sialylated glycoforms within cells and in plasma. The extent of glycosylation and sialylation are tissue and context specific. Glycated in plasma VLDL. Post-translationally, phosphorylated by FAM20C in the extracellular medium.

The protein localises to the secreted. It is found in the extracellular space. It localises to the extracellular matrix. Its subcellular location is the extracellular vesicle. The protein resides in the endosome. The protein localises to the multivesicular body. Its function is as follows. APOE is an apolipoprotein, a protein associating with lipid particles, that mainly functions in lipoprotein-mediated lipid transport between organs via the plasma and interstitial fluids. APOE is a core component of plasma lipoproteins and is involved in their production, conversion and clearance. Apolipoproteins are amphipathic molecules that interact both with lipids of the lipoprotein particle core and the aqueous environment of the plasma. As such, APOE associates with chylomicrons, chylomicron remnants, very low density lipoproteins (VLDL) and intermediate density lipoproteins (IDL) but shows a preferential binding to high-density lipoproteins (HDL). It also binds a wide range of cellular receptors including the LDL receptor/LDLR and the very low-density lipoprotein receptor/VLDLR that mediate the cellular uptake of the APOE-containing lipoprotein particles. Finally, APOE also has a heparin-binding activity and binds heparan-sulfate proteoglycans on the surface of cells, a property that supports the capture and the receptor-mediated uptake of APOE-containing lipoproteins by cells. The chain is Apolipoprotein E (APOE) from Oryctolagus cuniculus (Rabbit).